Here is a 242-residue protein sequence, read N- to C-terminus: Caffeoyl-CoA O-methyltransferase 4 (242 aa).

Residue K16 coordinates substrate. Residues T58, E80, 82–83, S88, D106, and A135 each bind S-adenosyl-L-methionine; that span reads GV. Residue D158 coordinates substrate. D158 lines the a divalent metal cation pocket. An S-adenosyl-L-methionine-binding site is contributed by D160. A divalent metal cation-binding residues include D184 and N185. Residue N189 participates in substrate binding.

The protein belongs to the class I-like SAM-binding methyltransferase superfamily. Cation-dependent O-methyltransferase family. CCoAMT subfamily. It depends on Mg(2+) as a cofactor. As to expression, mostly expressed in the bottom and middle parts of the stems.

It catalyses the reaction (E)-caffeoyl-CoA + S-adenosyl-L-methionine = (E)-feruloyl-CoA + S-adenosyl-L-homocysteine + H(+). It functions in the pathway aromatic compound metabolism; phenylpropanoid biosynthesis. In terms of biological role, methylates caffeoyl-CoA to feruloyl-CoA and 5-hydroxyferuloyl-CoA to sinapoyl-CoA. Plays a role in the synthesis of feruloylated polysaccharides. Involved in the reinforcement of the plant cell wall. Also involved in the responding to wounding or pathogen challenge by the increased formation of cell wall-bound ferulic acid polymers. This chain is Caffeoyl-CoA O-methyltransferase 4 (CCOAOMT4), found in Nicotiana tabacum (Common tobacco).